A 426-amino-acid chain; its full sequence is Elongation factor 1-alpha (426 aa).

Residues 5–221 (KPHINLAVIG…NALKEPEKPT (217 aa)) enclose the tr-type G domain. The G1 stretch occupies residues 14 to 21 (GHIDHGKS). Position 14-21 (14-21 (GHIDHGKS)) interacts with GTP. Mg(2+) is bound at residue S21. The tract at residues 70–74 (GITID) is G2. The G3 stretch occupies residues 91–94 (DCPG). Residues 91-95 (DCPGH) and 146-149 (NKMD) contribute to the GTP site. The tract at residues 146-149 (NKMD) is G4. The segment at 185–187 (SAF) is G5.

The protein belongs to the TRAFAC class translation factor GTPase superfamily. Classic translation factor GTPase family. EF-Tu/EF-1A subfamily.

Its subcellular location is the cytoplasm. It catalyses the reaction GTP + H2O = GDP + phosphate + H(+). GTP hydrolase that promotes the GTP-dependent binding of aminoacyl-tRNA to the A-site of ribosomes during protein biosynthesis. This is Elongation factor 1-alpha from Methanocella arvoryzae (strain DSM 22066 / NBRC 105507 / MRE50).